The chain runs to 407 residues: Transmembrane protein 184B (407 aa).

The interval 1 to 25 (MTVRGDVLAPDPASPTTAAASPSVS) is disordered. The segment covering 9 to 25 (APDPASPTTAAASPSVS) has biased composition (low complexity). Helical transmembrane passes span 40-60 (FLMTTAAQAISGFFVWTALLI), 84-104 (ILFIVPIYAFDSWLSLLFFTN), 121-141 (LVIYNFLSLCYEYLGGESSIM), 178-198 (LQFCVVKPLMAVSTVVLQAFG), 214-234 (VTIIYNISVSLALYALFLFYF), 249-269 (FFMVKSVIFLSFWQGMLLAIL), and 290-310 (VAAGYQDFIICVEMFFAALAL). The segment at 369 to 395 (TLEPGPTWRGGAHGLSRSHSLSGARDN) is disordered. 3 positions are modified to phosphoserine: S388, S402, and S403.

It belongs to the TMEM184 family.

The protein localises to the membrane. May activate the MAP kinase signaling pathway. This chain is Transmembrane protein 184B (TMEM184B), found in Homo sapiens (Human).